Consider the following 390-residue polypeptide: Aspergillopepsin-1 (390 aa).

Positions 1-19 are cleaved as a signal peptide; that stretch reads MVNTSLLAALTAYAVAVAA. A propeptide spans 20-67 (activation peptide); sequence APTAPQVKGFSVNQVAVPKGVYRHPAAQLAKAYGKYHATVPTQVAAAA. Positions 84-387 constitute a Peptidase A1 domain; sequence YITQVTVGDD…DASGPRLGFA (304 aa). Active-site residues include aspartate 100 and aspartate 281.

It belongs to the peptidase A1 family. As to quaternary structure, monomer.

It localises to the secreted. It catalyses the reaction Hydrolysis of proteins with broad specificity. Generally favors hydrophobic residues in P1 and P1', but also accepts Lys in P1, which leads to activation of trypsinogen. Does not clot milk.. With respect to regulation, inhibited by the microbial peptide pepstatin A. In terms of biological role, secreted aspartic endopeptidase that allows assimilation of proteinaceous substrates. The scissile peptide bond is attacked by a nucleophilic water molecule activated by two aspartic residues in the active site. Shows a broad primary substrate specificity. Favors hydrophobic residues at the P1 and P1' positions, but also accepts a lysine residue in the P1 position, leading to the activation of trypsinogen and chymotrypsinogen A. Hydrolyzes myoglobin, hemoglobin and other natural proteins. Hydrolyzes equine myoglobin between positions 'Met-1' and 'Gly-2', 'Lys-43' and 'Phe-44', and 'Leu-70' and 'Thr-71'. This chain is Aspergillopepsin-1 (pepA), found in Aspergillus pseudoglaucus (Eurotium repens).